Reading from the N-terminus, the 372-residue chain is Glutamate 5-kinase (372 aa).

Lys14 serves as a coordination point for ATP. Residues Ser54, Asp141, and Asn153 each coordinate substrate. Residue 173 to 174 coordinates ATP; it reads TD. A PUA domain is found at 280–358; sequence RGNVTLDEGA…DEIESLLGYI (79 aa).

This sequence belongs to the glutamate 5-kinase family.

The protein resides in the cytoplasm. The enzyme catalyses L-glutamate + ATP = L-glutamyl 5-phosphate + ADP. It functions in the pathway amino-acid biosynthesis; L-proline biosynthesis; L-glutamate 5-semialdehyde from L-glutamate: step 1/2. In terms of biological role, catalyzes the transfer of a phosphate group to glutamate to form L-glutamate 5-phosphate. This is Glutamate 5-kinase from Nitrosospira multiformis (strain ATCC 25196 / NCIMB 11849 / C 71).